The following is a 233-amino-acid chain: MIELKHVTFGYNKKQMVLQDINITIPDGENVGILGESGCGKSTLASLVLGLFKPAKGEIYLSDNAVLPIFQHPLTSFNPDWTIETSLKEALYYYRGLTDNTAQDQLLLQHLSTFELNAQLLTKLPSEVSGGQLQRFNVMRSLLAQPRVLICDEITSNLDVIAEQNVINILKAQTITNLNHFIVISHDLSVLQRLVNRIIVLKDGMIVDDFAIEELFNVDRHPYTKELVQAFSY.

The region spanning Ile-2 to Val-228 is the ABC transporter domain. Gly-35–Ser-42 contacts ATP.

The protein belongs to the ABC transporter superfamily. As to quaternary structure, the complex is composed of two ATP-binding proteins (NikD and NikE), two transmembrane proteins (NikB and NikC) and a solute-binding protein (NikA).

The protein resides in the cell membrane. It carries out the reaction Ni(2+)(out) + ATP + H2O = Ni(2+)(in) + ADP + phosphate + H(+). Its function is as follows. Part of the ABC transporter complex NikABCDE (Opp2) involved in nickel import. Probably responsible for energy coupling to the transport system. The chain is Nickel import system ATP-binding protein NikE from Staphylococcus aureus (strain MSSA476).